Consider the following 331-residue polypeptide: GTP 3',8-cyclase (331 aa).

Positions 9–233 (PFGRRITYLR…VRSSKVTGGP (225 aa)) constitute a Radical SAM core domain. Residue Arg-18 coordinates GTP. Residues Cys-25 and Cys-29 each coordinate [4Fe-4S] cluster. Tyr-31 provides a ligand contact to S-adenosyl-L-methionine. Cys-32 lines the [4Fe-4S] cluster pocket. Arg-67 contacts GTP. Gly-71 serves as a coordination point for S-adenosyl-L-methionine. A GTP-binding site is contributed by Thr-98. An S-adenosyl-L-methionine-binding site is contributed by Ser-122. Position 159 (Lys-159) interacts with GTP. Met-193 contributes to the S-adenosyl-L-methionine binding site. The [4Fe-4S] cluster site is built by Cys-257 and Cys-260. 262 to 264 (RVR) is a GTP binding site. Position 274 (Cys-274) interacts with [4Fe-4S] cluster.

The protein belongs to the radical SAM superfamily. MoaA family. As to quaternary structure, monomer and homodimer. Requires [4Fe-4S] cluster as cofactor.

It catalyses the reaction GTP + AH2 + S-adenosyl-L-methionine = (8S)-3',8-cyclo-7,8-dihydroguanosine 5'-triphosphate + 5'-deoxyadenosine + L-methionine + A + H(+). It participates in cofactor biosynthesis; molybdopterin biosynthesis. Functionally, catalyzes the cyclization of GTP to (8S)-3',8-cyclo-7,8-dihydroguanosine 5'-triphosphate. This is GTP 3',8-cyclase from Ectopseudomonas mendocina (strain ymp) (Pseudomonas mendocina).